Consider the following 249-residue polypeptide: Secreted flagellin C (249 aa).

In terms of processing, the secreted form is about 1 kDa larger than the whole cell lysate form, presumably due to post-translational modification. A 22 kDa form is also found in the secreted fraction, probably resulting from proteolysis.

It localises to the secreted. Its subcellular location is the host cell surface. Plays a role in virulence. The protein is Secreted flagellin C (flaC) of Campylobacter jejuni subsp. jejuni serotype O:2 (strain ATCC 700819 / NCTC 11168).